Consider the following 156-residue polypeptide: Cyanate hydratase (156 aa).

Catalysis depends on residues arginine 96, glutamate 99, and serine 122.

It belongs to the cyanase family.

The catalysed reaction is cyanate + hydrogencarbonate + 3 H(+) = NH4(+) + 2 CO2. Functionally, catalyzes the reaction of cyanate with bicarbonate to produce ammonia and carbon dioxide. The polypeptide is Cyanate hydratase (Photorhabdus laumondii subsp. laumondii (strain DSM 15139 / CIP 105565 / TT01) (Photorhabdus luminescens subsp. laumondii)).